The chain runs to 1029 residues: Multidrug resistance protein MdtC (1029 aa).

A run of 11 helical transmembrane segments spans residues 15–35 (ILLS…LPVA), 333–353 (EVEQ…FLFL), 360–380 (LIPA…MYLC), 387–407 (LSLM…IVAL), 431–451 (VGFT…PLLL), 469–489 (VAIG…CGWL), 528–548 (LVGL…ISIP), 853–873 (VILI…LYES), 897–917 (AFDA…IGIV), 953–973 (PIMM…IASG), and 984–1004 (ITIV…TPVV).

This sequence belongs to the resistance-nodulation-cell division (RND) (TC 2.A.6) family. MdtC subfamily. Part of a tripartite efflux system composed of MdtA, MdtB and MdtC. MdtC forms a heteromultimer with MdtB.

Its subcellular location is the cell inner membrane. The sequence is that of Multidrug resistance protein MdtC from Cronobacter sakazakii (strain ATCC BAA-894) (Enterobacter sakazakii).